Here is a 45-residue protein sequence, read N- to C-terminus: Large ribosomal subunit protein bL34 (45 aa).

The protein belongs to the bacterial ribosomal protein bL34 family.

In Frankia casuarinae (strain DSM 45818 / CECT 9043 / HFP020203 / CcI3), this protein is Large ribosomal subunit protein bL34.